A 92-amino-acid chain; its full sequence is YcgL domain-containing protein Sfri_1738 (92 aa).

The 85-residue stretch at 1-85 folds into the YcgL domain; it reads MICAVYKSGR…PQINLLEQHK (85 aa).

The polypeptide is YcgL domain-containing protein Sfri_1738 (Shewanella frigidimarina (strain NCIMB 400)).